A 559-amino-acid chain; its full sequence is Urocanate hydratase (559 aa).

NAD(+) is bound by residues 54–55, Q132, 178–180, E198, R203, 244–245, 265–269, 275–276, and Y324; these read GG, GMG, NA, QTSAH, and YL. C412 is an active-site residue. G494 serves as a coordination point for NAD(+).

The protein belongs to the urocanase family. It depends on NAD(+) as a cofactor.

It is found in the cytoplasm. It carries out the reaction 4-imidazolone-5-propanoate = trans-urocanate + H2O. Its pathway is amino-acid degradation; L-histidine degradation into L-glutamate; N-formimidoyl-L-glutamate from L-histidine: step 2/3. Functionally, catalyzes the conversion of urocanate to 4-imidazolone-5-propionate. This is Urocanate hydratase from Photorhabdus laumondii subsp. laumondii (strain DSM 15139 / CIP 105565 / TT01) (Photorhabdus luminescens subsp. laumondii).